Here is a 509-residue protein sequence, read N- to C-terminus: MAYQVLLICLVSTIVFAYILWRKQSKKNLPPSPKALPIIGHLHLVSPIPHQDFYKLSTRHGPIMQLFLGSVPCVVASTAEAAKEFLKTHEINFSNRPGQNVAVKGLAYDSQDFLFAFAPFGPYWKFMKKLCMSELLSGRMMDQFLPVRQQETKRFISRVFRKGVAGEAVDFGDELMTLSNNIVSRMTLSQKTSENDNQAEEMKKLVSNIAELMGKFNVSDFIWYLKPFDLQGFNRKIKETRDRFDVVVDGIIKQRQEERRKNKETGTAKQFKDMLDVLLDMHEDENAEIKLDKKNIKAFIMDIFVAGTDTSAVSIEWAMAELINNPDVLEKARQEIDAVVGKSRMVEESDIANLPYLQAIVRETLRLHPGGPLVVRESSKSAVVCGYDIPAKTRLFVNVWAIGRDPNHWEKPFEFRPERFIRDGQNQLDVRGQHYHFIPFGSGRRTCPGASLAWQVVPVNLAIIIQCFQWKLVGGNGKVDMEEKSGITLPRANPIICVPVPRINPFPTI.

Cysteine 447 contributes to the heme binding site.

It belongs to the cytochrome P450 family. Heme serves as cofactor.

It is found in the membrane. It carries out the reaction (6aR,11aR)-3,9-dihydroxypterocarpan + reduced [NADPH--hemoprotein reductase] + O2 = (6aS,11aS)-3,6a,9-trihydroxypterocarpan + oxidized [NADPH--hemoprotein reductase] + H2O + H(+). Functionally, cytochrome P450 involved in the biosynthesis of the phytoalexin glyceollin. Stereospecific for (6aR,11aR)-3,9-dihydroxypterocarpan. This Glycine max (Soybean) protein is 3,9-dihydroxypterocarpan 6A-monooxygenase (CYP93A1).